The sequence spans 139 residues: MTERTLVLIKPDAVARGYVGEILGRIERKGLTISALELRTAPGDIAAAHYAEHEGRPFYPGLLEFITGGPLVAAVLEGPRAIAAFRQLAGGTDPVEKAVPGTIRGDFGLEAQENLVHGSDSVESAEREIALWFPQFAAN.

Residues Lys10, Phe58, Arg86, Thr92, Arg104, and Asn114 each coordinate ATP. Catalysis depends on His117, which acts as the Pros-phosphohistidine intermediate.

The protein belongs to the NDK family. Homotetramer. Mg(2+) is required as a cofactor.

Its subcellular location is the cytoplasm. The enzyme catalyses a 2'-deoxyribonucleoside 5'-diphosphate + ATP = a 2'-deoxyribonucleoside 5'-triphosphate + ADP. It catalyses the reaction a ribonucleoside 5'-diphosphate + ATP = a ribonucleoside 5'-triphosphate + ADP. Its function is as follows. Major role in the synthesis of nucleoside triphosphates other than ATP. The ATP gamma phosphate is transferred to the NDP beta phosphate via a ping-pong mechanism, using a phosphorylated active-site intermediate. This chain is Nucleoside diphosphate kinase, found in Rhodococcus opacus (strain B4).